The primary structure comprises 370 residues: 3-isopropylmalate dehydrogenase (370 aa).

An NAD(+)-binding site is contributed by 77 to 90 (GPKWDSVPYEVRPE). Positions 97, 107, 135, and 226 each coordinate substrate. Positions 226, 250, and 254 each coordinate Mg(2+). 290 to 302 (GSAPDIAGQGLAN) serves as a coordination point for NAD(+).

The protein belongs to the isocitrate and isopropylmalate dehydrogenases family. LeuB type 1 subfamily. In terms of assembly, homodimer. Mg(2+) serves as cofactor. It depends on Mn(2+) as a cofactor.

It is found in the cytoplasm. The enzyme catalyses (2R,3S)-3-isopropylmalate + NAD(+) = 4-methyl-2-oxopentanoate + CO2 + NADH. The protein operates within amino-acid biosynthesis; L-leucine biosynthesis; L-leucine from 3-methyl-2-oxobutanoate: step 3/4. Catalyzes the oxidation of 3-carboxy-2-hydroxy-4-methylpentanoate (3-isopropylmalate) to 3-carboxy-4-methyl-2-oxopentanoate. The product decarboxylates to 4-methyl-2 oxopentanoate. The sequence is that of 3-isopropylmalate dehydrogenase from Nitrobacter winogradskyi (strain ATCC 25391 / DSM 10237 / CIP 104748 / NCIMB 11846 / Nb-255).